A 333-amino-acid chain; its full sequence is Homeobox protein Hox-A1 (333 aa).

Positions 61–82 are disordered; sequence ITSPHHHHHHHHHPQPATYQTS. Over residues 64 to 74 the composition is skewed to basic residues; the sequence is PHHHHHHHHHP. The tract at residues 74–202 is interaction with OGT; it reads PQPATYQTSG…PASETSSPAQ (129 aa). A glycan (O-linked (GlcNAc) threonine) is linked at T152. Positions 203-208 match the Antp-type hexapeptide motif; it reads TFDWMK. Positions 227–286 form a DNA-binding region, homeobox; sequence QPNAVRTNFTTKQLTELEKEFHFNKYLTRARSEIAASLQLNETQVKIWFQNRRMKQKKRE. The segment at 279-333 is disordered; sequence RMKQKKREKEGLLPMSPATPPGSDEKTEESSEKSSSSPSAPSPASSTSDTLTTSH. Over residues 301 to 310 the composition is skewed to basic and acidic residues; that stretch reads SDEKTEESSE. The span at 311–333 shows a compositional bias: low complexity; the sequence is KSSSSPSAPSPASSTSDTLTTSH.

It belongs to the Antp homeobox family. Labial subfamily. Interacts with OGT (via TPR repeats domain); the interaction takes place mainly in the nucleus. Forms a DNA-binding heterodimer with transcription factor PBX1. Post-translationally, glycosylated by OGT.

The protein resides in the nucleus. Its function is as follows. Sequence-specific transcription factor. Regulates multiple developmental processes including brainstem, inner and outer ear, abducens nerve and cardiovascular development and morphogenesis as well as cognition and behavior. Also part of a developmental regulatory system that provides cells with specific positional identities on the anterior-posterior axis. Acts on the anterior body structures. Seems to act in the maintenance and/or generation of hindbrain segments. Activates transcription in the presence of PBX1A and PKNOX1. This chain is Homeobox protein Hox-A1 (Hoxa1), found in Rattus norvegicus (Rat).